The sequence spans 158 residues: Putative pre-16S rRNA nuclease (158 aa).

The interval 138–158 is disordered; it reads ELKPAQQTASRSGAGAGDGGS.

The protein belongs to the YqgF nuclease family.

It localises to the cytoplasm. Its function is as follows. Could be a nuclease involved in processing of the 5'-end of pre-16S rRNA. The sequence is that of Putative pre-16S rRNA nuclease from Synechococcus sp. (strain CC9605).